The primary structure comprises 185 residues: Elongation factor P (185 aa).

The protein belongs to the elongation factor P family.

The protein resides in the cytoplasm. Its pathway is protein biosynthesis; polypeptide chain elongation. Involved in peptide bond synthesis. Stimulates efficient translation and peptide-bond synthesis on native or reconstituted 70S ribosomes in vitro. Probably functions indirectly by altering the affinity of the ribosome for aminoacyl-tRNA, thus increasing their reactivity as acceptors for peptidyl transferase. The polypeptide is Elongation factor P (Symbiobacterium thermophilum (strain DSM 24528 / JCM 14929 / IAM 14863 / T)).